The chain runs to 84 residues: Putative membrane protein insertion efficiency factor (84 aa).

Residues 60-84 form a disordered region; the sequence is WSQPGEDPVPDHFSLKRNDTRKQSH. A compositionally biased stretch (basic and acidic residues) spans 68–84; it reads VPDHFSLKRNDTRKQSH.

Belongs to the UPF0161 family.

Its subcellular location is the cell membrane. Its function is as follows. Could be involved in insertion of integral membrane proteins into the membrane. The polypeptide is Putative membrane protein insertion efficiency factor (Streptococcus gordonii (strain Challis / ATCC 35105 / BCRC 15272 / CH1 / DL1 / V288)).